The following is a 335-amino-acid chain: Ficolin-1 (335 aa).

The N-terminal stretch at 1 to 17 (MWWPMLWAFPVLLCLCS) is a signal peptide. Residues 47-114 (SCPSFPGPPG…TASPLGQKEL (68 aa)) form a disordered region. The Collagen-like domain maps to 50–88 (SFPGPPGPKGEPGSPAGRGERGLQGSPGKMGPPGSKGEP). Over residues 75–88 (SPGKMGPPGSKGEP) the composition is skewed to low complexity. In terms of domain architecture, Fibrinogen C-terminal spans 117–335 (ALCRRGPRSC…KVAEMKIRAS (219 aa)). 2 cysteine pairs are disulfide-bonded: Cys119–Cys147 and Cys126–Cys154. The interval 123 to 162 (PRSCKDLLTRGIFLTGWYTIYLPDCRPLTVLCDMDVDGGG) is a domain; contributes to trimerization. Positions 163–251 (WTVFQRRVDG…LTLGQFLEGT (89 aa)) are b domain; contributes to trimerization. Residue Asp270 coordinates Ca(2+). A glycan (N-linked (GlcNAc...) asparagine) is linked at Asn271. A Ca(2+)-binding site is contributed by Asp272. Cys279 and Cys292 form a disulfide bridge. 291 to 293 (DCH) lines the a carbohydrate pocket. A p domain region spans residues 326 to 335 (KVAEMKIRAS).

It belongs to the ficolin lectin family. In terms of assembly, homotrimer. Interacts with elastin/ELN. Interacts (via Fibrinogen C-terminal domain) with FFAR2. Interacts with CRP; may regulate monocyte activation by FCN1.

It is found in the secreted. Its subcellular location is the cell membrane. Extracellular lectin functioning as a pattern-recognition receptor in innate immunity. Binds the sugar moieties of pathogen-associated molecular patterns (PAMPs) displayed on microbes and activates the lectin pathway of the complement system. May also activate monocytes through a G protein-coupled receptor, FFAR2, inducing the secretion of interleukin-8/IL-8. Binds preferentially to 9-O-acetylated 2-6-linked sialic acid derivatives and to various glycans containing sialic acid engaged in a 2-3 linkage. The chain is Ficolin-1 (Fcn1) from Rattus norvegicus (Rat).